A 388-amino-acid polypeptide reads, in one-letter code: Queuine tRNA-ribosyltransferase (388 aa).

The active-site Proton acceptor is the Asp91. Residues 91–95 (DSGGY), Asp145, Gln190, and Gly217 contribute to the substrate site. Residues 248–254 (GVGAPED) form an RNA binding region. The active-site Nucleophile is Asp267. The tract at residues 272–276 (TRLAR) is RNA binding; important for wobble base 34 recognition. Zn(2+)-binding residues include Cys305, Cys307, Cys310, and His336.

It belongs to the queuine tRNA-ribosyltransferase family. In terms of assembly, homodimer. Within each dimer, one monomer is responsible for RNA recognition and catalysis, while the other monomer binds to the replacement base PreQ1. Requires Zn(2+) as cofactor.

It catalyses the reaction 7-aminomethyl-7-carbaguanine + guanosine(34) in tRNA = 7-aminomethyl-7-carbaguanosine(34) in tRNA + guanine. The protein operates within tRNA modification; tRNA-queuosine biosynthesis. In terms of biological role, catalyzes the base-exchange of a guanine (G) residue with the queuine precursor 7-aminomethyl-7-deazaguanine (PreQ1) at position 34 (anticodon wobble position) in tRNAs with GU(N) anticodons (tRNA-Asp, -Asn, -His and -Tyr). Catalysis occurs through a double-displacement mechanism. The nucleophile active site attacks the C1' of nucleotide 34 to detach the guanine base from the RNA, forming a covalent enzyme-RNA intermediate. The proton acceptor active site deprotonates the incoming PreQ1, allowing a nucleophilic attack on the C1' of the ribose to form the product. After dissociation, two additional enzymatic reactions on the tRNA convert PreQ1 to queuine (Q), resulting in the hypermodified nucleoside queuosine (7-(((4,5-cis-dihydroxy-2-cyclopenten-1-yl)amino)methyl)-7-deazaguanosine). In Dictyoglomus turgidum (strain DSM 6724 / Z-1310), this protein is Queuine tRNA-ribosyltransferase.